The chain runs to 65 residues: Large ribosomal subunit protein uL29 (65 aa).

The protein belongs to the universal ribosomal protein uL29 family.

The protein is Large ribosomal subunit protein uL29 of Desulforapulum autotrophicum (strain ATCC 43914 / DSM 3382 / VKM B-1955 / HRM2) (Desulfobacterium autotrophicum).